Consider the following 746-residue polypeptide: Polyribonucleotide nucleotidyltransferase (746 aa).

Mg(2+) is bound by residues Asp490 and Asp496. The 63-residue stretch at 557–619 folds into the KH domain; the sequence is PRIETMIIGK…ATIDAAVKAI (63 aa). The S1 motif domain occupies 629-699; that stretch reads GEVYEGKISS…KTGKFKLSRK (71 aa). The disordered stretch occupies residues 701–746; that stretch reads LLPKPEGYEERPPRPERGERGPRQDRGDRGPRQDRGDRGPRREYRD. Positions 706 to 746 are enriched in basic and acidic residues; it reads EGYEERPPRPERGERGPRQDRGDRGPRQDRGDRGPRREYRD.

This sequence belongs to the polyribonucleotide nucleotidyltransferase family. Requires Mg(2+) as cofactor.

The protein localises to the cytoplasm. It carries out the reaction RNA(n+1) + phosphate = RNA(n) + a ribonucleoside 5'-diphosphate. In terms of biological role, involved in mRNA degradation. Catalyzes the phosphorolysis of single-stranded polyribonucleotides processively in the 3'- to 5'-direction. This chain is Polyribonucleotide nucleotidyltransferase, found in Parabacteroides distasonis (strain ATCC 8503 / DSM 20701 / CIP 104284 / JCM 5825 / NCTC 11152).